A 73-amino-acid chain; its full sequence is Putative defensin-like protein 270 (73 aa).

The first 23 residues, 1 to 23 (MMSSKSHFVALLLIIFLIVNVQS), serve as a signal peptide directing secretion. 4 disulfides stabilise this stretch: cysteine 33/cysteine 72, cysteine 39/cysteine 60, cysteine 45/cysteine 70, and cysteine 49/cysteine 71.

The protein belongs to the DEFL family.

Its subcellular location is the secreted. The chain is Putative defensin-like protein 270 from Arabidopsis thaliana (Mouse-ear cress).